The primary structure comprises 645 residues: Threonine--tRNA ligase (645 aa).

Positions 1-63 (MEQINIQFPD…ETDGSIEIVT (63 aa)) constitute a TGS domain. The tract at residues 242–540 (DHRKIGKELE…LTEETKGAFP (299 aa)) is catalytic. Residues cysteine 336, histidine 387, and histidine 517 each coordinate Zn(2+).

The protein belongs to the class-II aminoacyl-tRNA synthetase family. In terms of assembly, homodimer. The cofactor is Zn(2+).

Its subcellular location is the cytoplasm. The enzyme catalyses tRNA(Thr) + L-threonine + ATP = L-threonyl-tRNA(Thr) + AMP + diphosphate + H(+). Catalyzes the attachment of threonine to tRNA(Thr) in a two-step reaction: L-threonine is first activated by ATP to form Thr-AMP and then transferred to the acceptor end of tRNA(Thr). Also edits incorrectly charged L-seryl-tRNA(Thr). This Staphylococcus aureus (strain NCTC 8325 / PS 47) protein is Threonine--tRNA ligase.